Reading from the N-terminus, the 543-residue chain is Chaperonin GroEL 2 (543 aa).

ATP contacts are provided by residues 29 to 32, 86 to 90, Gly-413, 479 to 481, and Asp-495; these read TLGP, DGTTT, and NAA.

The protein belongs to the chaperonin (HSP60) family. In terms of assembly, forms a cylinder of 14 subunits composed of two heptameric rings stacked back-to-back. Interacts with the co-chaperonin GroES.

Its subcellular location is the cytoplasm. It carries out the reaction ATP + H2O + a folded polypeptide = ADP + phosphate + an unfolded polypeptide.. In terms of biological role, together with its co-chaperonin GroES, plays an essential role in assisting protein folding. The GroEL-GroES system forms a nano-cage that allows encapsulation of the non-native substrate proteins and provides a physical environment optimized to promote and accelerate protein folding. The chain is Chaperonin GroEL 2 from Prochlorococcus marinus (strain NATL1A).